The chain runs to 364 residues: Trans-enoyl reductase ccsC (364 aa).

52 to 55 is an NADP(+) binding site; that stretch reads CDYK. 141 to 148 provides a ligand contact to substrate; it reads TGLATLGM. Residues 176–179, 199–202, tyrosine 217, and 264–265 contribute to the NADP(+) site; these read SSSV, SPRN, and LE. 284-288 is a binding site for substrate; sequence GPALL. Residue 353-354 participates in NADP(+) binding; the sequence is VS.

The protein belongs to the zinc-containing alcohol dehydrogenase family. As to quaternary structure, monomer.

It functions in the pathway mycotoxin biosynthesis. Trans-enoyl reductase; part of the gene cluster that mediates the biosynthesis of a family of the mycotoxins cytochalasins E and K. The hybrid PKS-NRPS synthetase ccsA and the enoyl reductase ccsC are responsible for fusion of phenylalanine with an octaketide backbone and subsequent release of the stable tetramic acid precursor. The polyketide synthase module (PKS) of the PKS-NRPS ccsA is responsible for the synthesis of the octaketide backbone. The downstream nonribosomal peptide synthetase (NRPS) amidates the carboxyl end of the octaketide with a phenylalanine. A reductase-like domain (R) at the C-terminus catalyzes the reductive release of the polyketide-amino acid intermediate. Because ccsA lacks a designated enoylreductase (ER) domain, the required activity is provided the enoyl reductase ccsC. Upon formation of the 11-membered carbocycle-fused perhydroisoindolone intermediate, a number of oxidative steps are required to afford the final cytochalasin E and K, including two hydroxylations at C17 and C18, one alcohol oxidation at C17, one epoxidation at C6 and C7 and two Baeyer-Villiger oxidations. The oxidative modification at C17, C18 and the C6-C7 epoxidation are likely to be catalyzed by the two cytochrome P450 oxygenases ccsD and ccsG. CcsD may be responsible for the epoxidation of the C6-C7 double bond. CcsG may be responsible for the successive oxidative modifications at C17 and C18. The double Baeyer-Villiger oxidations of ketocytochalasin to precytochalasin and cytochalasin Z(16) are among the final steps leading to cytochalasin E and K and are catalyzed by ccsB. The first oxygen insertion step follows that of the classic BVMO mechanism, generating the ester precytochalasin. Release of precytochalasin into an aqueous environment can generate the shunt product iso-precytochalasin through spontaneous isomerization. Alternatively, precytochalasin can undergo further oxidation by ccsB to yield the in-line carbonate-containing cytochalasin Z(16). Cytochalasin Z(16) is a precursor to cytochalasin E and cytochalasin K, whereas iso-precytochalasin is a precursor to cytochalasin Z(17) and rosellichalasin. The hydrolyase ccsE may catalyze hydrolysis of epoxide bond in cytochalasin E to afford cytochalasin K. The function of ccsF has not been assigned but it may play a role in post-PKS-NRPS biosynthetic step, resistance or transport of cytochalasins and related PKS-NRPS products. This Aspergillus clavatus (strain ATCC 1007 / CBS 513.65 / DSM 816 / NCTC 3887 / NRRL 1 / QM 1276 / 107) protein is Trans-enoyl reductase ccsC.